The sequence spans 248 residues: Lysine-rich arabinogalactan protein 19 (248 aa).

The first 24 residues, 1–24, serve as a signal peptide directing secretion; the sequence is MESNSIIWSLLLASALISSFSVNA. Over residues 25 to 37 the composition is skewed to low complexity; that stretch reads QGPAASPVTSTTT. The segment at 25–221 is disordered; that stretch reads QGPAASPVTS…APSPNTNGGN (197 aa). 3 stretches are compositionally biased toward pro residues: residues 38 to 57, 67 to 86, and 94 to 171; these read APPPTTAAPPTTAAPPPTTT, PASPVTPPPAVTPTSPPAPK, and ATPP…PAPA. Over residues 173 to 187 the composition is skewed to basic residues; the sequence is TKHKRKHKHKRHHHA. Over residues 189-203 the composition is skewed to pro residues; the sequence is APAPIPPSPPSPPVL. Residue Ser196 is the site of GPI-anchor amidated serine attachment. A propeptide spans 197-248 (removed in mature form); sequence PPSPPVLTDPQDTAPAPSPNTNGGNALNQLKGRAVMWLNTGLVILFLLAMTA.

The protein belongs to the lysine-rich AGP family. In terms of processing, O-glycosylated on the hydroxyproline residues. Strongly expressed in stems, moderately expressed in flowers and roots and weakly expressed in young leaves.

It is found in the cell membrane. In terms of biological role, proteoglycan that seems to be implicated in diverse developmental roles such as differentiation, cell-cell recognition, embryogenesis and programmed cell death. The protein is Lysine-rich arabinogalactan protein 19 (AGP19) of Arabidopsis thaliana (Mouse-ear cress).